The sequence spans 303 residues: UDP-3-O-acyl-N-acetylglucosamine deacetylase (303 aa).

Positions 78, 237, and 241 each coordinate Zn(2+). The active-site Proton donor is histidine 264.

Belongs to the LpxC family. Zn(2+) is required as a cofactor.

The enzyme catalyses a UDP-3-O-[(3R)-3-hydroxyacyl]-N-acetyl-alpha-D-glucosamine + H2O = a UDP-3-O-[(3R)-3-hydroxyacyl]-alpha-D-glucosamine + acetate. The protein operates within glycolipid biosynthesis; lipid IV(A) biosynthesis; lipid IV(A) from (3R)-3-hydroxytetradecanoyl-[acyl-carrier-protein] and UDP-N-acetyl-alpha-D-glucosamine: step 2/6. In terms of biological role, catalyzes the hydrolysis of UDP-3-O-myristoyl-N-acetylglucosamine to form UDP-3-O-myristoylglucosamine and acetate, the committed step in lipid A biosynthesis. This is UDP-3-O-acyl-N-acetylglucosamine deacetylase from Xanthomonas euvesicatoria pv. vesicatoria (strain 85-10) (Xanthomonas campestris pv. vesicatoria).